The sequence spans 220 residues: UPF0319 protein YccT (220 aa).

A signal peptide spans 1–20 (MKTGALTTFLALCLPVTVFA).

It belongs to the UPF0319 family.

This chain is UPF0319 protein YccT, found in Salmonella dublin (strain CT_02021853).